We begin with the raw amino-acid sequence, 75 residues long: Acylphosphatase-like protein MJ1405 (75 aa).

Residues 8 to 75 (TYEIIIYGRI…TNFWRVRKCK (68 aa)) enclose the Acylphosphatase-like domain.

This chain is Acylphosphatase-like protein MJ1405, found in Methanocaldococcus jannaschii (strain ATCC 43067 / DSM 2661 / JAL-1 / JCM 10045 / NBRC 100440) (Methanococcus jannaschii).